Here is an 88-residue protein sequence, read N- to C-terminus: MALLDFFLSRKKSTANIAKERLQIIVAERRRSDAEPHYLPQLRKDILEVICKYVQIDPEMVTVQLEQKDGDISILELNVTLPEAEESK.

It belongs to the MinE family.

Its function is as follows. Prevents the cell division inhibition by proteins MinC and MinD at internal division sites while permitting inhibition at polar sites. This ensures cell division at the proper site by restricting the formation of a division septum at the midpoint of the long axis of the cell. In Salmonella agona (strain SL483), this protein is Cell division topological specificity factor.